A 429-amino-acid chain; its full sequence is ETS domain-containing protein Elk-1 (429 aa).

Residues 5 to 86 (VTLWQFLLQL…SGQKFVYKFV (82 aa)) constitute a DNA-binding region (ETS). Disordered stretches follow at residues 119–146 (HAGP…GLAR), 165–204 (SLQP…SPNP), and 227–253 (APNQ…KVEG). Over residues 169–178 (QPQPPIPPRP) the composition is skewed to pro residues. Residues K231, K250, and K255 each participate in a glycyl lysine isopeptide (Lys-Gly) (interchain with G-Cter in SUMO) cross-link. The segment covering 302–312 (STSTTEITQPQ) has biased composition (polar residues). The disordered stretch occupies residues 302–354 (STSTTEITQPQKGRKPRDLELPLSPSLLGGQGPERTPGSGTSSGLQAPGPALT). At S325 the chain carries Phosphoserine; by MAPK1. 4 positions are modified to phosphothreonine; by MAPK1: T337, T354, T364, and T369. Positions 350 to 400 (GPALTPSLLPTHTLTPVLLTPSSLPPSIHFWSTLSPIAPRSPAKLSFQFPS) are sufficient for interaction with MAD2L2. O-linked (GlcNAc) threonine glycosylation is present at T382. The residue at position 384 (S384) is a Phosphoserine; by MAPK1 and MAPK8. Residue S390 is modified to Phosphoserine; by MAPK1. At T418 the chain carries Phosphothreonine; by MAPK1. Phosphoserine; by MAPK1 is present on S423.

This sequence belongs to the ETS family. In terms of assembly, interacts in its sumoylated form with PIAS2/PIASX which enhances its transcriptional activator activity. Interacts with MAD2L2; the interaction is direct and promotes phosphorylation by the kinases MAPK8 and/or MAPK9. Interacts with POU1F1. Post-translationally, sumoylation represses transcriptional activator activity as it results in recruitment of HDAC2 to target gene promoters which leads to decreased histone acetylation and reduced transactivator activity. It also regulates nuclear retention. In terms of processing, on mitogenic stimulation, phosphorylated on C-terminal serine and threonine residues by MAPK1 but also MAPK8 and/or MAPK9. Phosphorylation leads to loss of sumoylation and restores transcriptional activator activity. Phosphorylated and activated by CaMK4, MAPK11, MAPK12 and MAPK14. Upon bFGF stimulus, phosphorylated by PAK1. Phosphorylated by PRP4K at Thr-418; phosphorylation activation ELK1 transcriptional activity. Predominantly expressed in the brain, and to a lesser extent in the heart, liver and muscle.

The protein resides in the nucleus. Functionally, transcription factor that binds to purine-rich DNA sequences. Forms a ternary complex with SRF and the ETS and SRF motifs of the serum response element (SRE) on the promoter region of immediate early genes such as FOS and IER2. Induces target gene transcription upon JNK and MAPK-signaling pathways stimulation. This is ETS domain-containing protein Elk-1 from Mus musculus (Mouse).